We begin with the raw amino-acid sequence, 405 residues long: Multi-drug resistance efflux pump PmrA homolog (405 aa).

The next 12 membrane-spanning stretches (helical) occupy residues 13–33, 50–70, 88–108, 111–131, 147–167, 170–190, 216–236, 254–274, 286–306, 308–328, 350–370, and 374–394; these read LFITWIGCFFVGSSFSLVMPF, LYSGLAFSLPALASGLVAPIW, IVMTLTMGGIAFAPNVWWLLG, LLMGFFSGYIPNSTAMIASQA, MVSGTLIGPSLGGLLAEWFGM, VFLIVGALLALATLLTIFFVH, ILFGLLVTTFIIQITSQSIEP, FISGLIVSAVGLSAMLSSSFL, LILIGLVFTFIIYLPMAFVQS, LQLGILRFLLGFGTGALTPSV, MCSNLGMVTGPLVGSAIAGYI, and AAIVGTSLFVIVNIIWSFINF.

It belongs to the major facilitator superfamily. TCR/Tet family.

The protein resides in the cell membrane. Its function is as follows. Efflux pump for various substrates. This chain is Multi-drug resistance efflux pump PmrA homolog (pmrA), found in Lactococcus lactis subsp. lactis (strain IL1403) (Streptococcus lactis).